The chain runs to 338 residues: Lumican (338 aa).

The N-terminal stretch at 1 to 18 (MNVCAFSLALALVGSVSG) is a signal peptide. Gln19 bears the Pyrrolidone carboxylic acid mark. A sulfotyrosine mark is found at Tyr20, Tyr21, Tyr23, and Tyr30. Residues 28–66 (FMYGQISPNCAPECNCPHSYPTAMYCDDLKLKSVPMVPP) enclose the LRRNT domain. LRR repeat units lie at residues 67–88 (GIKY…AFEN), 91–114 (DLQW…VFSK), 117–137 (QLKK…PLPK), 138–159 (SLQD…DGLV), 160–181 (NLTF…ASLK), 185–205 (SLEY…GLPT), 206–227 (SLLT…YFKR), and 230–250 (GLQY…PGNS). Residue Asn88 is glycosylated (N-linked (GlcNAc...) (keratan sulfate) asparagine). A glycan (N-linked (GlcNAc...) (keratan sulfate) asparagine) is linked at Asn127. Asn160 carries an N-linked (GlcNAc...) (keratan sulfate) asparagine glycan. N-linked (GlcNAc...) (keratan sulfate) asparagine glycosylation occurs at Asn252. LRR repeat units lie at residues 255 to 276 (SLLE…NENL) and 277 to 296 (ENYY…SFCK). Cys295 and Cys328 are disulfide-bonded. The residue at position 304 (Ser304) is a Phosphoserine. One copy of the LRR 11 repeat lies at 305–326 (KIKHLRLDGNPLTQSSLPPDMY).

The protein belongs to the small leucine-rich proteoglycan (SLRP) family. SLRP class II subfamily. Binds to laminin. Contains keratan sulfate. In terms of processing, cys-37, Cys-41, Cys-43 and Cys-53 are involved in disulfide bonds. As to expression, cornea and other tissues.

Its subcellular location is the secreted. The protein resides in the extracellular space. It localises to the extracellular matrix. This Mus musculus (Mouse) protein is Lumican (Lum).